The sequence spans 306 residues: MNIRDLGKVAVLLGGRSAEREISLKSGHAVLAALQRSQVDAHAFDPVGQPLEDLLKQGFDRAFIALHGRYGEDGSVQGALELMDLPYTGSGILASALAMDKWRTKMIWQAAGISTPDYVMLDADSNFQEVTDRLGLPLIIKPAREGSTIGLNKVDYAQDMQSAYQTAAQHDSLVIAEQFIQGIELTAAILDDVPLPLVRIDVTEGLYDYQAKYFSESTRYTCPSGLSKILTTRIQEQALYAHRILGCTGWSRVDLILDKNGQPFFLEANTSPGMTNHSLVPMAAQAAGISFDELVIQILELSCEYA.

The ATP-grasp domain occupies lysine 105 to glutamate 300. Threonine 131 to threonine 186 is an ATP binding site. 3 residues coordinate Mg(2+): aspartate 254, glutamate 267, and asparagine 269.

The protein belongs to the D-alanine--D-alanine ligase family. Mg(2+) serves as cofactor. The cofactor is Mn(2+).

The protein localises to the cytoplasm. The catalysed reaction is 2 D-alanine + ATP = D-alanyl-D-alanine + ADP + phosphate + H(+). The protein operates within cell wall biogenesis; peptidoglycan biosynthesis. In terms of biological role, cell wall formation. This Nitrosomonas eutropha (strain DSM 101675 / C91 / Nm57) protein is D-alanine--D-alanine ligase.